The primary structure comprises 63 residues: Race-specific elicitor A9 (63 aa).

The signal sequence occupies residues 1–23 (MKLSLLSVELALLIATTLPLCWA). A propeptide spanning residues 24–35 (AALPVGLGVGLD) is cleaved from the precursor. 3 disulfides stabilise this stretch: Cys-37–Cys-51, Cys-41–Cys-54, and Cys-47–Cys-61.

In terms of biological role, this necrosis-inducing peptide induces a hypersensitive response on Cf-9 tomato genotypes. Race-specific elicitors are compounds which only induce defense responses in genotypes of host plants which are resistant to the pathogenic race that produces the elicitor, but not in susceptible genotypes. This is Race-specific elicitor A9 (AVR9) from Passalora fulva (Tomato leaf mold).